A 529-amino-acid chain; its full sequence is Peptide chain release factor 3 (529 aa).

The 270-residue stretch at 11–280 folds into the tr-type G domain; it reads AARRTFAIIS…GLVAWAPPPM (270 aa). Residues 20-27, 88-92, and 142-145 contribute to the GTP site; these read SHPDAGKT, DTPGH, and NKVD.

This sequence belongs to the TRAFAC class translation factor GTPase superfamily. Classic translation factor GTPase family. PrfC subfamily.

It localises to the cytoplasm. In terms of biological role, increases the formation of ribosomal termination complexes and stimulates activities of RF-1 and RF-2. It binds guanine nucleotides and has strong preference for UGA stop codons. It may interact directly with the ribosome. The stimulation of RF-1 and RF-2 is significantly reduced by GTP and GDP, but not by GMP. The protein is Peptide chain release factor 3 of Sodalis glossinidius (strain morsitans).